A 224-amino-acid chain; its full sequence is UPF0758 protein PBPRA0202 (224 aa).

The MPN domain occupies 102-224; it reads VLTSPQHTRH…IVSFSEQGWL (123 aa). Zn(2+)-binding residues include H173, H175, and D186. The JAMM motif signature appears at 173–186; the sequence is HNHPSGVAEPSQSD.

This sequence belongs to the UPF0758 family.

The chain is UPF0758 protein PBPRA0202 from Photobacterium profundum (strain SS9).